Consider the following 79-residue polypeptide: Keratin-associated protein 21-1 (79 aa).

Interacts with hair keratins.

In the hair cortex, hair keratin intermediate filaments are embedded in an interfilamentous matrix, consisting of hair keratin-associated proteins (KRTAP), which are essential for the formation of a rigid and resistant hair shaft through their extensive disulfide bond cross-linking with abundant cysteine residues of hair keratins. The matrix proteins include the high-sulfur and high-glycine-tyrosine keratins. This is Keratin-associated protein 21-1 (KRTAP21-1) from Homo sapiens (Human).